The following is a 163-amino-acid chain: Small ribosomal subunit protein uS9 (163 aa).

The disordered stretch occupies residues 1–41 (MAENTNDSAVLETEEELTSYTTETNAGAGTGTSTIAPGYGT). Positions 18–38 (TSYTTETNAGAGTGTSTIAPG) are enriched in low complexity.

This sequence belongs to the universal ribosomal protein uS9 family.

In Bifidobacterium adolescentis (strain ATCC 15703 / DSM 20083 / NCTC 11814 / E194a), this protein is Small ribosomal subunit protein uS9.